The primary structure comprises 406 residues: Eukaryotic initiation factor 4A-I (406 aa).

A disordered region spans residues 1–21; the sequence is MSASQDSRSRDNGPDGMEPEG. At serine 2 the chain carries N-acetylserine. Serine 4 bears the Phosphoserine mark. The Q motif motif lies at 32 to 60; that stretch reads DSLDDMNLSESLLRGIYAYGFEKPSAIQQ. Residues 63-234 enclose the Helicase ATP-binding domain; sequence ILSCIKGYDV…KKFMRDPIRI (172 aa). Residue 76–83 participates in ATP binding; it reads AQSGTGKT. Lysine 118 is modified (N6-acetyllysine). A Glycyl lysine isopeptide (Lys-Gly) (interchain with G-Cter in SUMO2) cross-link involves residue lysine 146. Threonine 158 carries the phosphothreonine modification. The residue at position 174 (lysine 174) is an N6-acetyllysine. A DEAD box motif is present at residues 182 to 185; the sequence is DEAD. Lysine 193 bears the N6-acetyllysine mark. Residue lysine 225 forms a Glycyl lysine isopeptide (Lys-Gly) (interchain with G-Cter in SUMO2) linkage. Lysine 238 carries the post-translational modification N6-acetyllysine; alternate. Lysine 238 participates in a covalent cross-link: Glycyl lysine isopeptide (Lys-Gly) (interchain with G-Cter in SUMO2); alternate. The Helicase C-terminal domain maps to 245 to 406; the sequence is GIRQFYINVE…EMPLNVADLI (162 aa). Residues lysine 309, lysine 369, and lysine 381 each participate in a glycyl lysine isopeptide (Lys-Gly) (interchain with G-Cter in SUMO2) cross-link.

The protein belongs to the DEAD box helicase family. eIF4A subfamily. EIF4F is a multi-subunit complex, the composition of which varies with external and internal environmental conditions. It is composed of at least EIF4A, EIF4E and EIF4G1/EIF4G3. Interacts with PAIP1, EIF4E and UPF2. Found in a complex with XPO7, EIF4A1, ARHGAP1, VPS26A, VPS29, VPS35 and SFN. May interact with NOM1. Interacts with PDCD4; this interferes with the interaction between EIF4A and EIF4G. Interacts with RBM4. Interacts with DDX3X in an RNA-independent manner. Interacts with PKP1 (via N-terminus); the interaction promotes EIF4A1 recruitment to the cap-dependent translation complex and EIF4A1 ATPase activity.

It localises to the cytoplasm. It is found in the perinuclear region. Its subcellular location is the cell membrane. The protein localises to the stress granule. It catalyses the reaction ATP + H2O = ADP + phosphate + H(+). ATP-dependent RNA helicase which is a subunit of the eIF4F complex involved in cap recognition and is required for mRNA binding to ribosome. In the current model of translation initiation, eIF4A unwinds RNA secondary structures in the 5'-UTR of mRNAs which is necessary to allow efficient binding of the small ribosomal subunit, and subsequent scanning for the initiator codon. As a result, promotes cell proliferation and growth. This chain is Eukaryotic initiation factor 4A-I (EIF4A1), found in Pongo abelii (Sumatran orangutan).